Consider the following 156-residue polypeptide: ATP synthase subunit b (156 aa).

A helical transmembrane segment spans residues 7-29; the sequence is LIGQLIAFALFTWFCVKFVWPPI.

This sequence belongs to the ATPase B chain family. As to quaternary structure, F-type ATPases have 2 components, F(1) - the catalytic core - and F(0) - the membrane proton channel. F(1) has five subunits: alpha(3), beta(3), gamma(1), delta(1), epsilon(1). F(0) has three main subunits: a(1), b(2) and c(10-14). The alpha and beta chains form an alternating ring which encloses part of the gamma chain. F(1) is attached to F(0) by a central stalk formed by the gamma and epsilon chains, while a peripheral stalk is formed by the delta and b chains.

Its subcellular location is the cell inner membrane. Functionally, f(1)F(0) ATP synthase produces ATP from ADP in the presence of a proton or sodium gradient. F-type ATPases consist of two structural domains, F(1) containing the extramembraneous catalytic core and F(0) containing the membrane proton channel, linked together by a central stalk and a peripheral stalk. During catalysis, ATP synthesis in the catalytic domain of F(1) is coupled via a rotary mechanism of the central stalk subunits to proton translocation. In terms of biological role, component of the F(0) channel, it forms part of the peripheral stalk, linking F(1) to F(0). This chain is ATP synthase subunit b, found in Mannheimia succiniciproducens (strain KCTC 0769BP / MBEL55E).